The following is a 643-amino-acid chain: Protein disulfide-isomerase A4 (643 aa).

Positions 1-20 (MRPRKAWMLVLLLALVQLLA) are cleaved as a signal peptide. 2 consecutive Thioredoxin domains span residues 21 to 168 (VASA…EVSQ) and 170 to 300 (NWTP…EFLK). The tract at residues 24 to 54 (AGAPDEDSTDKEDAIEEDEEEDEDDDDDDDD) is disordered. Residues 27–54 (PDEDSTDKEDAIEEDEEEDEDDDDDDDD) show a composition bias toward acidic residues. The CXXC motif lies at 90 to 93 (CGHC). Cystine bridges form between Cys-90–Cys-93 and Cys-205–Cys-208. An N6-acetyllysine modification is found at Lys-365. The 132-residue stretch at 503–634 (FKKGKLKPVI…LSKFIEEHAT (132 aa)) folds into the Thioredoxin 3 domain. A CXXC motif is present at residues 553–556 (CGHC). Cys-553 and Cys-556 are disulfide-bonded. The short motif at 640 to 643 (KEEL) is the Prevents secretion from ER element.

Belongs to the protein disulfide isomerase family. As to quaternary structure, part of a large chaperone multiprotein complex comprising DNAJB11, HSP90B1, HSPA5, HYOU, PDIA2, PDIA4, PDIA6, PPIB, SDF2L1, UGGT1 and very small amounts of ERP29, but not, or at very low levels, CALR nor CANX. Component of a complex containing at least CRELD2, MANF, MATN3 and PDIA4.

It localises to the endoplasmic reticulum lumen. The protein resides in the melanosome. The catalysed reaction is Catalyzes the rearrangement of -S-S- bonds in proteins.. The sequence is that of Protein disulfide-isomerase A4 (PDIA4) from Bos taurus (Bovine).